The following is a 165-amino-acid chain: Protein SprT (165 aa).

Residues 20 to 163 (EKLAQANLKL…RCVHCGEQLV (144 aa)) enclose the SprT-like domain. His-78 provides a ligand contact to Zn(2+). Glu-79 is a catalytic residue. Zn(2+) is bound at residue His-82.

Belongs to the SprT family. Zn(2+) serves as cofactor.

The protein resides in the cytoplasm. This Escherichia coli (strain K12 / MC4100 / BW2952) protein is Protein SprT.